Consider the following 115-residue polypeptide: Holo-[acyl-carrier-protein] synthase (115 aa).

Residues D6 and E51 each coordinate Mg(2+).

It belongs to the P-Pant transferase superfamily. AcpS family. Mg(2+) is required as a cofactor.

It localises to the cytoplasm. It catalyses the reaction apo-[ACP] + CoA = holo-[ACP] + adenosine 3',5'-bisphosphate + H(+). Functionally, transfers the 4'-phosphopantetheine moiety from coenzyme A to a Ser of acyl-carrier-protein. The polypeptide is Holo-[acyl-carrier-protein] synthase (Campylobacter jejuni subsp. doylei (strain ATCC BAA-1458 / RM4099 / 269.97)).